We begin with the raw amino-acid sequence, 343 residues long: Cytoplasmic tRNA 2-thiolation protein 1 (343 aa).

It belongs to the TtcA family. CTU1/NCS6/ATPBD3 subfamily.

It is found in the cytoplasm. It participates in tRNA modification; 5-methoxycarbonylmethyl-2-thiouridine-tRNA biosynthesis. Plays a central role in 2-thiolation of mcm(5)S(2)U at tRNA wobble positions of tRNA(Lys), tRNA(Glu) and tRNA(Gln). Directly binds tRNAs and probably acts by catalyzing adenylation of tRNAs, an intermediate required for 2-thiolation. It is unclear whether it acts as a sulfurtransferase that transfers sulfur from thiocarboxylated URM1 onto the uridine of tRNAs at wobble position. The protein is Cytoplasmic tRNA 2-thiolation protein 1 of Drosophila willistoni (Fruit fly).